Reading from the N-terminus, the 122-residue chain is Large ribosomal subunit protein uL14 (122 aa).

The protein belongs to the universal ribosomal protein uL14 family. In terms of assembly, part of the 50S ribosomal subunit. Forms a cluster with proteins L3 and L19. In the 70S ribosome, L14 and L19 interact and together make contacts with the 16S rRNA in bridges B5 and B8.

In terms of biological role, binds to 23S rRNA. Forms part of two intersubunit bridges in the 70S ribosome. The sequence is that of Large ribosomal subunit protein uL14 from Anaeromyxobacter dehalogenans (strain 2CP-1 / ATCC BAA-258).